A 345-amino-acid polypeptide reads, in one-letter code: Phosphoribosylformylglycinamidine cyclo-ligase (345 aa).

Belongs to the AIR synthase family.

The protein localises to the cytoplasm. It catalyses the reaction 2-formamido-N(1)-(5-O-phospho-beta-D-ribosyl)acetamidine + ATP = 5-amino-1-(5-phospho-beta-D-ribosyl)imidazole + ADP + phosphate + H(+). The protein operates within purine metabolism; IMP biosynthesis via de novo pathway; 5-amino-1-(5-phospho-D-ribosyl)imidazole from N(2)-formyl-N(1)-(5-phospho-D-ribosyl)glycinamide: step 2/2. This is Phosphoribosylformylglycinamidine cyclo-ligase from Escherichia coli O139:H28 (strain E24377A / ETEC).